A 367-amino-acid polypeptide reads, in one-letter code: Germination protease (367 aa).

Positions 1-15 are excised as a propeptide; that stretch reads MKEPLDLSKYSVRTD.

Belongs to the peptidase A25 family. As to quaternary structure, homotetramer. In terms of processing, autoproteolytically processed. The inactive tetrameric zymogen termed p46 autoprocesses to a smaller form termed p41, which is active only during spore germination.

The enzyme catalyses Endopeptidase action with P4 Glu or Asp, P1 preferably Glu &gt; Asp, P1' hydrophobic and P2' Ala.. Initiates the rapid degradation of small, acid-soluble proteins during spore germination. The polypeptide is Germination protease (Bacillus cereus (strain ATCC 10987 / NRS 248)).